We begin with the raw amino-acid sequence, 88 residues long: Small ribosomal subunit protein bS20 (88 aa).

This sequence belongs to the bacterial ribosomal protein bS20 family.

Its function is as follows. Binds directly to 16S ribosomal RNA. This Clostridium botulinum (strain 657 / Type Ba4) protein is Small ribosomal subunit protein bS20.